The chain runs to 94 residues: Cystatin-A3 (94 aa).

Positions 46-50 (QLVNG) match the Secondary area of contact motif.

This sequence belongs to the cystatin family.

It is found in the cytoplasm. In terms of biological role, intracellular thiol proteinase inhibitor. The polypeptide is Cystatin-A3 (cpiC) (Dictyostelium discoideum (Social amoeba)).